The sequence spans 213 residues: Thiamine-phosphate synthase (213 aa).

Residues 40-44 (QYRDK) and asparagine 72 each bind 4-amino-2-methyl-5-(diphosphooxymethyl)pyrimidine. Mg(2+)-binding residues include aspartate 73 and aspartate 91. Threonine 110 contacts 4-amino-2-methyl-5-(diphosphooxymethyl)pyrimidine. Residue 137-139 (SHT) participates in 2-[(2R,5Z)-2-carboxy-4-methylthiazol-5(2H)-ylidene]ethyl phosphate binding. Lysine 140 contacts 4-amino-2-methyl-5-(diphosphooxymethyl)pyrimidine. 2-[(2R,5Z)-2-carboxy-4-methylthiazol-5(2H)-ylidene]ethyl phosphate is bound at residue glycine 167.

It belongs to the thiamine-phosphate synthase family. Requires Mg(2+) as cofactor.

The enzyme catalyses 2-[(2R,5Z)-2-carboxy-4-methylthiazol-5(2H)-ylidene]ethyl phosphate + 4-amino-2-methyl-5-(diphosphooxymethyl)pyrimidine + 2 H(+) = thiamine phosphate + CO2 + diphosphate. It catalyses the reaction 2-(2-carboxy-4-methylthiazol-5-yl)ethyl phosphate + 4-amino-2-methyl-5-(diphosphooxymethyl)pyrimidine + 2 H(+) = thiamine phosphate + CO2 + diphosphate. It carries out the reaction 4-methyl-5-(2-phosphooxyethyl)-thiazole + 4-amino-2-methyl-5-(diphosphooxymethyl)pyrimidine + H(+) = thiamine phosphate + diphosphate. The protein operates within cofactor biosynthesis; thiamine diphosphate biosynthesis; thiamine phosphate from 4-amino-2-methyl-5-diphosphomethylpyrimidine and 4-methyl-5-(2-phosphoethyl)-thiazole: step 1/1. In terms of biological role, condenses 4-methyl-5-(beta-hydroxyethyl)thiazole monophosphate (THZ-P) and 2-methyl-4-amino-5-hydroxymethyl pyrimidine pyrophosphate (HMP-PP) to form thiamine monophosphate (TMP). This is Thiamine-phosphate synthase from Stutzerimonas stutzeri (strain A1501) (Pseudomonas stutzeri).